Here is a 512-residue protein sequence, read N- to C-terminus: Glutathione-binding protein GsiB (512 aa).

The N-terminal stretch at 1-26 (MARAVHRSGLVALGIATALMASCAFA) is a signal peptide.

It belongs to the bacterial solute-binding protein 5 family. As to quaternary structure, the complex is composed of two ATP-binding proteins (GsiA), two transmembrane proteins (GsiC and GsiD) and a solute-binding protein (GsiB).

The protein localises to the periplasm. In terms of biological role, part of the ABC transporter complex GsiABCD involved in glutathione import. Binds glutathione. The protein is Glutathione-binding protein GsiB of Shigella boydii serotype 4 (strain Sb227).